Reading from the N-terminus, the 741-residue chain is NUT family member 2G (741 aa).

Disordered regions lie at residues 172-200 (PGNA…PDDS), 293-375 (IQKS…PEEI), 391-424 (LGSH…SDPG), 496-624 (RAAP…LPGM), and 638-741 (RLSQ…HCSQ). Over residues 304–321 (SLPPPAPPRLEPRGPPAP) the composition is skewed to pro residues. Residues 402–412 (EGQREKGKVEQ) show a composition bias toward basic and acidic residues. Residues 528–545 (QRVSVETSPPQTAAQDPQ) are compositionally biased toward polar residues. Residues 639–650 (LSQSPVPSSGLL) show a composition bias toward low complexity. Positions 731-741 (SRRKKKRHCSQ) are enriched in basic residues.

Belongs to the NUT family.

This is NUT family member 2G (NUTM2G) from Homo sapiens (Human).